Reading from the N-terminus, the 350-residue chain is (RS)-norcoclaurine 6-O-methyltransferase (350 aa).

Residue methionine 166 coordinates S-adenosyl-L-methionine. Aspartate 169 is a binding site for substrate. Residues threonine 170, glycine 195, aspartate 218, 238-239 (DM), and lysine 252 contribute to the S-adenosyl-L-methionine site. Substrate-binding positions include 253–257 (CILHD) and aspartate 306. Catalysis depends on histidine 256, which acts as the Proton acceptor.

This sequence belongs to the class I-like SAM-binding methyltransferase superfamily. Cation-independent O-methyltransferase family. COMT subfamily. In terms of assembly, homodimer. Expressed in leaf primordia of rhizomes and root endodermis.

It catalyses the reaction (S)-norcoclaurine + S-adenosyl-L-methionine = (S)-coclaurine + S-adenosyl-L-homocysteine + H(+). The enzyme catalyses norcoclaurine + S-adenosyl-L-methionine = coclaurine + S-adenosyl-L-homocysteine + H(+). Inhibited by sanguinarine. In terms of biological role, involved in the biosynthesis of coclaurine, a precursor of benzylisoquinoline alkaloids. Catalyzes the transfer of the S-methyl group of S-adenosyl-L-methionine (AdoMet) to the 6-hydroxyl group of norcoclaurine to form coclaurine. The sequence is that of (RS)-norcoclaurine 6-O-methyltransferase from Thalictrum flavum subsp. glaucum (Yellow meadow rue).